The sequence spans 1241 residues: MIMFPLFGKISLGILIFVLIEGDFPSLTAQTYLSIEEIQEPKSAVSFLLPEESTDLSLATKKKQPLDRRETERQWLIRRRRSILFPNGVKICPDESVAEAVANHVKYFKVRVCQEAVWEAFRTFWDRLPGREEYHYWMNLCEDGVTSIFEMGTNFSESVEHRSLIMKKLTYAKETVSSSELSSPVPVGDTSTLGDTTLSVPHPEVDAYEGASESSLERPEESISNEIENVIEEATKPAGEQIAEFSIHLLGKQYREELQDSSSFHHQHLEEEFISEVENAFTGLPGYKEIRVLEFRSPKENDSGVDVYYAVTFNGEAISNTTWDLISLHSNKVENHGLVELDDKPTVVYTISNFRDYIAETLQQNFLLGNSSLNPDPDSLQLINVRGVLRHQTEDLVWNTQSSSLQATPSSILDNTFQAAWPSADESITSSIPPLDFSSGPPSATGRELWSESPLGDLVSTHKLAFPSKMGLSSSPEVLEVSSLTLHSVTPAVLQTGLPVASEERTSGSHLVEDGLANVEESEDFLSIDSLPSSSFTQPVPKETIPSMEDSDVSLTSSPYLTSSIPFGLDSLTSKVKDQLKVSPFLPDASMEKELIFDGGLGSGSGQKVDLITWPWSETSSEKSAEPLSKPWLEDDDSLLPAEIEDKKLVLVDKMDSTDQISKHSKYEHDDRSTHFPEEEPLSGPAVPIFADTAAESASLTLPKHISEVPGVDDYSVTKAPLILTSVAISASTDKSDQADAILREDMEQITESSNYEWFDSEVSMVKPDMQTLWTILPESERVWTRTSSLEKLSRDILASTPQSADRLWLSVTQSTKLPPTTISTLLEDEVIMGVQDISLELDRIGTDYYQPEQVQEQNGKVGSYVEMSTSVHSTEMVSVAWPTEGGDDLSYTQTSGALVVFFSLRVTNMMFSEDLFNKNSLEYKALEQRFLELLVPYLQSNLTGFQNLEILNFRNGSIVVNSRMKFANSVPPNVNNAVYMILEDFCTTAYNTMNLAIDKYSLDVESGDEANPCKFQACNEFSECLVNPWSGEAKCRCFPGYLSVEERPCQSLCDLQPDFCLNDGKCDIMPGHGAICRCRVGENWWYRGKHCEEFVSEPVIIGITIASVVGLLVIFSAIIYFFIRTLQAHHDRSERESPFSGSSRQPDSLSSIENAVKYNPVYESHRAGCEKYEGPYPQHPFYSSASGDVIGGLSREEIRQMYESSELSREEIQERMRVLELYANDPEFAAFVREQQVEEV.

The N-terminal stretch at 1-22 (MIMFPLFGKISLGILIFVLIEG) is a signal peptide. The Extracellular portion of the chain corresponds to 23–1099 (DFPSLTAQTY…KHCEEFVSEP (1077 aa)). An N-linked (GlcNAc...) asparagine glycan is attached at Asn-154. The segment at 180 to 223 (ELSSPVPVGDTSTLGDTTLSVPHPEVDAYEGASESSLERPEESI) is disordered. Residues 189 to 199 (DTSTLGDTTLS) show a composition bias toward polar residues. Residues Thr-190 and Thr-192 are each glycosylated (O-linked (GalNAc...) threonine). Positions 239–353 (GEQIAEFSIH…KPTVVYTISN (115 aa)) constitute an SEA 1 domain. The hyaluronan-binding motif involved in chondroitin sulfate A-binding stretch occupies residues 259–267 (QDSSSFHHQ). Residues Asn-301, Asn-320, and Asn-370 are each glycosylated (N-linked (GlcNAc...) asparagine). O-linked (GalNAc...) threonine glycans are attached at residues Thr-544 and Thr-556. Residues 660–678 (QISKHSKYEHDDRSTHFPE) show a composition bias toward basic and acidic residues. Positions 660-684 (QISKHSKYEHDDRSTHFPEEEPLSG) are disordered. The SEA 2 domain maps to 897-1010 (GALVVFFSLR…YSLDVESGDE (114 aa)). Residues Asn-942 and Asn-956 are each glycosylated (N-linked (GlcNAc...) asparagine). 2 EGF-like domains span residues 1010–1051 (EANP…RPCQ) and 1052–1093 (SLCD…KHCE). 6 cysteine pairs are disulfide-bonded: Cys-1014-Cys-1025, Cys-1019-Cys-1036, Cys-1038-Cys-1050, Cys-1054-Cys-1067, Cys-1061-Cys-1077, and Cys-1079-Cys-1092. The tract at residues 1080–1088 (RVGENWWYR) is hyaluronan-binding motif involved in chondroitin sulfate C-binding. The helical transmembrane segment at 1100–1120 (VIIGITIASVVGLLVIFSAII) threads the bilayer. The Cytoplasmic segment spans residues 1121-1241 (YFFIRTLQAH…FVREQQVEEV (121 aa)). The interval 1125–1133 (RTLQAHHDR) is hyaluronan-binding motif involved in chondroitin sulfate A- and C-binding. A hyaluronan-binding motif involved in chondroitin sulfate C-binding region spans residues 1136–1145 (RESPFSGSSR). Positions 1210-1218 (REEIQERMR) are hyaluronan-binding motif involved in chondroitin sulfate A- and C-binding motif.

Post-translationally, highly glycosylated (N- and O-linked carbohydrates). As to expression, expressed in the retina (at protein level). Expressed by photoreceptors of the interphotoreceptor matrix (IPM) surrounding both rods and cones (at protein level). IPM occupies the subretinal space between the apices of the retinal pigment epithelium and the neural retina. Expressed in the pineal gland (at protein level).

It is found in the photoreceptor outer segment membrane. The protein resides in the photoreceptor inner segment membrane. Its subcellular location is the secreted. It localises to the extracellular space. The protein localises to the extracellular matrix. It is found in the interphotoreceptor matrix. Chondroitin sulfate- and hyaluronan-binding proteoglycan involved in the organization of interphotoreceptor matrix; may participate in the maturation and maintenance of the light-sensitive photoreceptor outer segment. Binds heparin. This is Interphotoreceptor matrix proteoglycan 2 (IMPG2) from Homo sapiens (Human).